Reading from the N-terminus, the 372-residue chain is Dual-specificity RNA methyltransferase RlmN (372 aa).

E93 acts as the Proton acceptor in catalysis. Residues 99–338 (EKDRATLCIS…VTVRKTRGDD (240 aa)) enclose the Radical SAM core domain. A disulfide bridge links C106 with C343. [4Fe-4S] cluster-binding residues include C113, C117, and C120. Residues 167–168 (GE), S199, 221–223 (SLH), and N300 contribute to the S-adenosyl-L-methionine site. The active-site S-methylcysteine intermediate is the C343.

It belongs to the radical SAM superfamily. RlmN family. [4Fe-4S] cluster serves as cofactor.

It is found in the cytoplasm. It catalyses the reaction adenosine(2503) in 23S rRNA + 2 reduced [2Fe-2S]-[ferredoxin] + 2 S-adenosyl-L-methionine = 2-methyladenosine(2503) in 23S rRNA + 5'-deoxyadenosine + L-methionine + 2 oxidized [2Fe-2S]-[ferredoxin] + S-adenosyl-L-homocysteine. The enzyme catalyses adenosine(37) in tRNA + 2 reduced [2Fe-2S]-[ferredoxin] + 2 S-adenosyl-L-methionine = 2-methyladenosine(37) in tRNA + 5'-deoxyadenosine + L-methionine + 2 oxidized [2Fe-2S]-[ferredoxin] + S-adenosyl-L-homocysteine. Functionally, specifically methylates position 2 of adenine 2503 in 23S rRNA and position 2 of adenine 37 in tRNAs. m2A2503 modification seems to play a crucial role in the proofreading step occurring at the peptidyl transferase center and thus would serve to optimize ribosomal fidelity. This Psychromonas ingrahamii (strain DSM 17664 / CCUG 51855 / 37) protein is Dual-specificity RNA methyltransferase RlmN.